The chain runs to 190 residues: Transcription antitermination protein NusB (190 aa).

The tract at residues 158–190 is disordered; it reads AGTSEDHVPQREPAAGQLGQDDSNGGQVAAVCR.

This sequence belongs to the NusB family.

Its function is as follows. Involved in transcription antitermination. Required for transcription of ribosomal RNA (rRNA) genes. Binds specifically to the boxA antiterminator sequence of the ribosomal RNA (rrn) operons. The sequence is that of Transcription antitermination protein NusB from Mycobacterium leprae (strain TN).